Here is a 22-residue protein sequence, read N- to C-terminus: Zinc metalloproteinase oxiagin (22 aa).

Positions 14–22 (CYIEFYVVV) constitute a Peptidase M12B domain.

It belongs to the venom metalloproteinase (M12B) family. P-III subfamily. P-IIId sub-subfamily. In terms of assembly, heterotrimer; disulfide-linked. The heterotrimer consists of 1 metalloproteinase chain and 2 lectin chains. The cofactor is Zn(2+). In terms of processing, N-glycosylated. Expressed by the venom gland.

Its subcellular location is the secreted. Its function is as follows. Snake venom metalloproteinase that inhibits the classical complement pathway dose-dependently. It acts by binding to carbohydrates of IgG within the antibody-sensitized sheep erythrocytes (EA) complex, and thus prevents interaction of component C2 with immobilized C4b. Also induces cation-independent hemagglutination that can be prevented by D-galactose pretreatment. This chain is Zinc metalloproteinase oxiagin, found in Naja oxiana (Central Asian cobra).